The chain runs to 247 residues: uncharacterized protein (247 aa).

The N-terminal stretch at 1-35 (MWGPGVTAEGLSVAPAPPPLLPLLLLLALALVAPS) is a signal peptide. The N-linked (GlcNAc...) asparagine glycan is linked to asparagine 57. Residues 82–102 (LSGLLILLVLFAIGYFLQRII) traverse the membrane as a helical segment. Residues 109–179 (YPRGQARPGQ…GGRSDPSCAS (71 aa)) are disordered. The segment covering 160 to 172 (SGGGGRGRGGGGR) has biased composition (gly residues).

The protein localises to the membrane. This is an uncharacterized protein from Homo sapiens (Human).